A 344-amino-acid polypeptide reads, in one-letter code: Dihydroorotate dehydrogenase (quinone) (344 aa).

FMN-binding positions include 65-69 (AGLDK) and threonine 89. A substrate-binding site is contributed by lysine 69. 114–118 (NRLGF) lines the substrate pocket. Positions 145 and 178 each coordinate FMN. Residue asparagine 178 participates in substrate binding. The Nucleophile role is filled by serine 181. Asparagine 183 contacts substrate. FMN contacts are provided by lysine 223 and threonine 251. Substrate is bound at residue 252 to 253 (NT). Residues glycine 274, glycine 303, and 324-325 (YT) each bind FMN.

The protein belongs to the dihydroorotate dehydrogenase family. Type 2 subfamily. In terms of assembly, monomer. FMN is required as a cofactor.

It is found in the cell membrane. The catalysed reaction is (S)-dihydroorotate + a quinone = orotate + a quinol. Its pathway is pyrimidine metabolism; UMP biosynthesis via de novo pathway; orotate from (S)-dihydroorotate (quinone route): step 1/1. Catalyzes the conversion of dihydroorotate to orotate with quinone as electron acceptor. The protein is Dihydroorotate dehydrogenase (quinone) of Methylibium petroleiphilum (strain ATCC BAA-1232 / LMG 22953 / PM1).